The sequence spans 719 residues: Exonuclease mut-7 homolog (719 aa).

Residues 1–22 (MSKSNNVAPPCRQDQLGFVPAG) are disordered. A 3'-5' exonuclease domain is found at 575-629 (NLANLVRLCLGKKLDKSNQFSNWAQRPLRKEQLRYAALDAFCLLEIYDAIEKQLT). A disordered region spans residues 644 to 719 (NDVRPPSDSG…FEGPNTKSVL (76 aa)). Over residues 667 to 678 (RRNHRDKYNKRH) the composition is skewed to basic residues. Composition is skewed to polar residues over residues 683 to 692 (DSNSGNSSRA) and 706 to 719 (EQQT…KSVL).

It belongs to the mut-7 family. Mg(2+) is required as a cofactor.

Functionally, possesses 3'-5' exoribonuclease activity. Required for 3'-end trimming of AGO1-bound miRNAs. The protein is Exonuclease mut-7 homolog of Aedes aegypti (Yellowfever mosquito).